The primary structure comprises 238 residues: Survival of motor neuron-related-splicing factor 30 (238 aa).

One can recognise a Tudor domain in the interval 72 to 132 (SWKVGDKCMA…KPVEEGRKAK (61 aa)). Residues 142 to 160 (KKEMIAQQREYKKKKALKK) carry the Nuclear localization signal motif. Ser201 is modified (phosphoserine). N6-acetyllysine is present on Lys219.

Belongs to the SMN family. Associates with spliceosomes. Associates with U4/U5/U6 tri-snRNP and with U2 snRNP.

The protein resides in the nucleus speckle. The protein localises to the nucleus. Its subcellular location is the cajal body. Its function is as follows. Involved in spliceosome assembly. The sequence is that of Survival of motor neuron-related-splicing factor 30 (Smndc1) from Mus musculus (Mouse).